The sequence spans 260 residues: uncharacterized protein (260 aa).

Residues 1-22 (MGYSKRFALYISILILIVMVAG) form the signal peptide. Cys-23 carries the N-palmitoyl cysteine lipid modification. Cys-23 carries S-diacylglycerol cysteine lipidation.

Belongs to the staphylococcal tandem lipoprotein family.

Its subcellular location is the cell membrane. This is an uncharacterized protein from Staphylococcus aureus (strain N315).